Reading from the N-terminus, the 292-residue chain is Acetylglutamate kinase (292 aa).

Substrate-binding positions include 64-65, Arg86, and Asn190; that span reads GG.

The protein belongs to the acetylglutamate kinase family. ArgB subfamily.

It is found in the cytoplasm. It catalyses the reaction N-acetyl-L-glutamate + ATP = N-acetyl-L-glutamyl 5-phosphate + ADP. It participates in amino-acid biosynthesis; L-arginine biosynthesis; N(2)-acetyl-L-ornithine from L-glutamate: step 2/4. Its function is as follows. Catalyzes the ATP-dependent phosphorylation of N-acetyl-L-glutamate. This Trichlorobacter lovleyi (strain ATCC BAA-1151 / DSM 17278 / SZ) (Geobacter lovleyi) protein is Acetylglutamate kinase.